The chain runs to 257 residues: Large ribosomal subunit protein uL3 (257 aa).

Q151 carries the post-translational modification N5-methylglutamine. The disordered stretch occupies residues 218–257; sequence YPASIKSAANTNTAPADAPVETPAEEAVVDTAATDGAQES. Low complexity predominate over residues 225-236; it reads AANTNTAPADAP.

Belongs to the universal ribosomal protein uL3 family. In terms of assembly, part of the 50S ribosomal subunit. Forms a cluster with proteins L14 and L19. Post-translationally, methylated by PrmB.

Its function is as follows. One of the primary rRNA binding proteins, it binds directly near the 3'-end of the 23S rRNA, where it nucleates assembly of the 50S subunit. The chain is Large ribosomal subunit protein uL3 from Sphingopyxis alaskensis (strain DSM 13593 / LMG 18877 / RB2256) (Sphingomonas alaskensis).